An 824-amino-acid polypeptide reads, in one-letter code: Translation initiation factor IF-2 (824 aa).

The segment at 1–234 (MSDQDGKKPL…RQKAMGGSVD (234 aa)) is disordered. 2 stretches are compositionally biased toward basic and acidic residues: residues 59–75 (GGKRDKSVPDAEMDRRL) and 82–144 (KARE…RRNA). Residues 145 to 159 (PPEAAAPAVDPAAAA) show a composition bias toward low complexity. A compositionally biased stretch (basic and acidic residues) spans 170–186 (ARREPERDNKRENRSRG). Positions 321–491 (PRPPVITIMG…ALQAELLELK (171 aa)) constitute a tr-type G domain. Residues 330–337 (GHVDHGKT) are G1. A GTP-binding site is contributed by 330 to 337 (GHVDHGKT). Positions 355-359 (GITQH) are G2. A G3 region spans residues 377–380 (DTPG). GTP-binding positions include 377–381 (DTPGH) and 431–434 (NKID). Positions 431-434 (NKID) are G4. Positions 467 to 469 (SAM) are G5.

The protein belongs to the TRAFAC class translation factor GTPase superfamily. Classic translation factor GTPase family. IF-2 subfamily.

It localises to the cytoplasm. In terms of biological role, one of the essential components for the initiation of protein synthesis. Protects formylmethionyl-tRNA from spontaneous hydrolysis and promotes its binding to the 30S ribosomal subunits. Also involved in the hydrolysis of GTP during the formation of the 70S ribosomal complex. The protein is Translation initiation factor IF-2 of Jannaschia sp. (strain CCS1).